The following is a 162-amino-acid chain: 2-C-methyl-D-erythritol 2,4-cyclodiphosphate synthase (162 aa).

2 residues coordinate a divalent metal cation: aspartate 8 and histidine 10. 4-CDP-2-C-methyl-D-erythritol 2-phosphate is bound by residues 8–10 and 36–37; these read DVH and HS. An a divalent metal cation-binding site is contributed by histidine 44. 4-CDP-2-C-methyl-D-erythritol 2-phosphate is bound by residues 58–60, 63–67, 102–108, 134–137, phenylalanine 141, and arginine 144; these read DIG, FPDTD, AQAPKMA, and TTTE.

Belongs to the IspF family. Homotrimer. It depends on a divalent metal cation as a cofactor.

The enzyme catalyses 4-CDP-2-C-methyl-D-erythritol 2-phosphate = 2-C-methyl-D-erythritol 2,4-cyclic diphosphate + CMP. It participates in isoprenoid biosynthesis; isopentenyl diphosphate biosynthesis via DXP pathway; isopentenyl diphosphate from 1-deoxy-D-xylulose 5-phosphate: step 4/6. Functionally, involved in the biosynthesis of isopentenyl diphosphate (IPP) and dimethylallyl diphosphate (DMAPP), two major building blocks of isoprenoid compounds. Catalyzes the conversion of 4-diphosphocytidyl-2-C-methyl-D-erythritol 2-phosphate (CDP-ME2P) to 2-C-methyl-D-erythritol 2,4-cyclodiphosphate (ME-CPP) with a corresponding release of cytidine 5-monophosphate (CMP). This chain is 2-C-methyl-D-erythritol 2,4-cyclodiphosphate synthase, found in Yersinia enterocolitica serotype O:8 / biotype 1B (strain NCTC 13174 / 8081).